The chain runs to 520 residues: Hydroxymethylglutaryl-CoA synthase, cytoplasmic (520 aa).

The residue at position 4 (Ser4) is a Phosphoserine. (3S)-3-hydroxy-3-methylglutaryl-CoA contacts are provided by Asp43 and Ala44. 44-46 (AGK) contacts CoA. The residue at position 46 (Lys46) is an N6-acetyllysine. The active-site Proton donor/acceptor is Glu95. Cys129, Asn167, Thr171, Ser221, and His264 together coordinate (3S)-3-hydroxy-3-methylglutaryl-CoA. Cys129 functions as the Acyl-thioester intermediate in the catalytic mechanism. Residue Asn167 participates in CoA binding. Ser221 serves as a coordination point for CoA. The active-site Proton donor/acceptor is the His264. CoA contacts are provided by Lys269 and Lys273. Residues Lys273, Asn343, and Ser377 each contribute to the (3S)-3-hydroxy-3-methylglutaryl-CoA site. Lys273 carries the post-translational modification N6-acetyllysine. Residues 488–520 (TATEHIPSPAKKVPRLPATSAESESAVISNGEH) are disordered. Phosphoserine is present on residues Ser495 and Ser516. Residues 507 to 520 (SAESESAVISNGEH) are compositionally biased toward polar residues.

The protein belongs to the thiolase-like superfamily. HMG-CoA synthase family. Homodimer.

The protein resides in the cytoplasm. The catalysed reaction is acetoacetyl-CoA + acetyl-CoA + H2O = (3S)-3-hydroxy-3-methylglutaryl-CoA + CoA + H(+). It participates in metabolic intermediate biosynthesis; (R)-mevalonate biosynthesis; (R)-mevalonate from acetyl-CoA: step 2/3. In terms of biological role, catalyzes the condensation of acetyl-CoA with acetoacetyl-CoA to form HMG-CoA, which is converted by HMG-CoA reductase (HMGCR) into mevalonate, a precursor for cholesterol synthesis. The polypeptide is Hydroxymethylglutaryl-CoA synthase, cytoplasmic (Mus musculus (Mouse)).